The following is a 1076-amino-acid chain: MPKREDIRKIMVIGSGPIVIGQAAEFDYSGSQACKALREEGYEVVLVNSNPATIMTDPEMADRVYIEPLDAEIVAKIIERETPDALLPTLGGQTALNLAVQLTEMGVLDKYGVELIGAKFEAIKKAEDRELFKEAMRKIGLDVPKSDVAHDVSEALAIADEIGYPVVVRPAFTLGGTGGGIAYNREELREIAERGIKMSMINQVLIEEGVLGWKEFELEVMRDLADNVVIICSIENFDPMGVHTGDSITVAPAQTLTDVEYQYLRDAAIKIIREIGVETGGSNIQFAVHPENGRVVAIEMNPRVSRSSALASKATGFPIAKIAAKLAVGYTLDEIPNDITKETPASFEPTIDYVVVKIPRFAFDKFPTANQVLGSQMKSVGEVMAVGRTFEEALQKAIRSLEIGRYGLGCDGKDKEVTMEEIRERLRYPNASRVFYIRYALQKGMSVNEIYELTKIDPWFIDKIKNLVEFEEQLKQIAERMSIEEVPKEILKKAKELGYSDRQLAVIFNTTEREVRRVRKGKGLRVVYKMVDTCAAEFEAKTPYYYSTYEDENEALRSERKKVMILGAGPNRIGQGIEFDYCCVHAVFSLKDEGYETIMVNCNPETVSTDYDTSDRLYFEPITHEDVMNIYENEQPEGVIVQFGGQTPLNIARELEDSGARILGTSVDSIDIAEDRERFAELLERLNIPQPENGIAHSLEEAKEIARKIGFPVLVRPSYVLGGRAMEIVYDEETLERYITEALEVSPEKPILIDKFLEDAIEVEVDALCDGEEVVIGGIMEHIEEAGVHSGDSACVLPPVSLDEVTINTIVDYTRKLALALNVVGLINIQYAVKDGKVYVLEANPRASRTVPFVSKATGIPLAKIAAKLMMGKKLRELGVKEKLKLKHVAVKEAVFPFIKLPGVDPVLGPEMKSTGEVMGIDYDFGLAYYKAELAAGMKLPLKGTVFISVRRKDKNDRLLYLARKFKELGFRIIATDGTRDFLVQNGIEADLILKISQGRPNILDAIVNGQVDLIINTPSGKRGRTEGYMIRRAAVDYGVAHITTLAGAMAAVRAIEAVKSRKMVVKSIQEYHEES.

The segment at 1–402 (MPKREDIRKI…ALQKAIRSLE (402 aa)) is carboxyphosphate synthetic domain. Residues R129, R169, G175, G176, E208, V210, E215, G241, V242, H243, Q285, and E299 each contribute to the ATP site. Residues 133-328 (KEAMRKIGLD…IAKIAAKLAV (196 aa)) form the ATP-grasp 1 domain. Mg(2+) is bound by residues Q285, E299, and N301. Residues Q285, E299, and N301 each contribute to the Mn(2+) site. The segment at 403-555 (IGRYGLGCDG…YSTYEDENEA (153 aa)) is oligomerization domain. Positions 556–939 (LRSERKKVMI…YKAELAAGMK (384 aa)) are carbamoyl phosphate synthetic domain. Residues 680–871 (AELLERLNIP…LAKIAAKLMM (192 aa)) form the ATP-grasp 2 domain. Residues R716, K755, L757, E762, G787, V788, H789, S790, Q830, and E842 each contribute to the ATP site. 3 residues coordinate Mg(2+): Q830, E842, and N844. Residues Q830, E842, and N844 each coordinate Mn(2+). An MGS-like domain is found at 938–1076 (MKLPLKGTVF…KSIQEYHEES (139 aa)). The interval 940-1076 (LPLKGTVFIS…KSIQEYHEES (137 aa)) is allosteric domain.

This sequence belongs to the CarB family. As to quaternary structure, composed of two chains; the small (or glutamine) chain promotes the hydrolysis of glutamine to ammonia, which is used by the large (or ammonia) chain to synthesize carbamoyl phosphate. Tetramer of heterodimers (alpha,beta)4. Mg(2+) serves as cofactor. Mn(2+) is required as a cofactor.

It carries out the reaction hydrogencarbonate + L-glutamine + 2 ATP + H2O = carbamoyl phosphate + L-glutamate + 2 ADP + phosphate + 2 H(+). It catalyses the reaction hydrogencarbonate + NH4(+) + 2 ATP = carbamoyl phosphate + 2 ADP + phosphate + 2 H(+). It functions in the pathway amino-acid biosynthesis; L-arginine biosynthesis; carbamoyl phosphate from bicarbonate: step 1/1. The protein operates within pyrimidine metabolism; UMP biosynthesis via de novo pathway; (S)-dihydroorotate from bicarbonate: step 1/3. Its function is as follows. Large subunit of the glutamine-dependent carbamoyl phosphate synthetase (CPSase). CPSase catalyzes the formation of carbamoyl phosphate from the ammonia moiety of glutamine, carbonate, and phosphate donated by ATP, constituting the first step of 2 biosynthetic pathways, one leading to arginine and/or urea and the other to pyrimidine nucleotides. The large subunit (synthetase) binds the substrates ammonia (free or transferred from glutamine from the small subunit), hydrogencarbonate and ATP and carries out an ATP-coupled ligase reaction, activating hydrogencarbonate by forming carboxy phosphate which reacts with ammonia to form carbamoyl phosphate. This is Carbamoyl phosphate synthase large chain from Archaeoglobus fulgidus (strain ATCC 49558 / DSM 4304 / JCM 9628 / NBRC 100126 / VC-16).